Consider the following 2837-residue polypeptide: Bifunctional DNA-directed RNA polymerase subunit beta-beta' (2837 aa).

Positions 1-1433 (MVDSSYMYAS…CLNVDLKQND (1433 aa)) are DNA-directed RNA polymerase subunit beta. A DNA-directed RNA polymerase subunit beta' region spans residues 1436 to 2837 (IEDISHTNIA…ESVVAYDQSN (1402 aa)). Zn(2+) is bound by residues Cys-1501, Cys-1503, Cys-1516, and Cys-1519. Positions 1893, 1895, and 1897 each coordinate Mg(2+). Zn(2+)-binding residues include Cys-2235, Cys-2309, Cys-2316, and Cys-2319.

In the N-terminal section; belongs to the RNA polymerase beta chain family. This sequence in the C-terminal section; belongs to the RNA polymerase beta' chain family. The RNAP catalytic core consists of 2 alpha, 1 beta/beta' and 1 omega subunit. When a sigma factor is associated with the core the holoenzyme is formed, which can initiate transcription. Mg(2+) is required as a cofactor. Zn(2+) serves as cofactor.

The enzyme catalyses RNA(n) + a ribonucleoside 5'-triphosphate = RNA(n+1) + diphosphate. In terms of biological role, DNA-dependent RNA polymerase catalyzes the transcription of DNA into RNA using the four ribonucleoside triphosphates as substrates. The chain is Bifunctional DNA-directed RNA polymerase subunit beta-beta' (rpoBC) from Wolbachia pipientis wMel.